Here is a 144-residue protein sequence, read N- to C-terminus: Maximins 2/H8 type 2 (144 aa).

Residues 1 to 18 form the signal peptide; the sequence is MNFKYIVAVSFLIASAYA. Positions 19 to 43 are excised as a propeptide; that stretch reads RSEENEIQSLSQRDVLEEESLREIR. An Asparagine amide modification is found at N70. Positions 74–123 are excised as a propeptide; the sequence is TAEEHEVMKRLETVMRDLDSLDYPEEASERETRGFNQEEIANLFTKKEKR. I143 is subject to Isoleucine amide.

This sequence belongs to the bombinin family. As to expression, expressed by the skin glands.

Its subcellular location is the secreted. In terms of biological role, maximin-2 shows antibacterial activity against both Gram-positive and Gram-negative bacteria. It also shows antimicrobial activity against the fungus C.albicans, but not against A.flavus nor P.uticale. It has little hemolytic activity. Maximin-H8 shows antimicrobial activity against bacteria and against the fungus C.albicans. Shows strong hemolytic activity. This chain is Maximins 2/H8 type 2, found in Bombina maxima (Giant fire-bellied toad).